The chain runs to 664 residues: E3 ubiquitin-protein ligase CHFR (664 aa).

An FHA domain is found at 38–89; that stretch reads WTIGRRRGCDLSFPSNKLVSGDHCKLTVDEISGEVTLEDTSTNGTVINKLQV. Disordered stretches follow at residues 170–220 and 245–264; these read LEEP…GRSS and ESKD…GDGE. Positions 174–202 are enriched in polar residues; that stretch reads QPSTSTSDLLPTASTSSTEPELTSAGQKH. The span at 203 to 215 shows a compositional bias: low complexity; that stretch reads SSSSGPGNTSISP. The segment covering 245-263 has biased composition (basic and acidic residues); it reads ESKDHEELEPAKKKMKGDG. An RING-type zinc finger spans residues 303-342; it reads CIICQDLLHDCVSLQPCMHTFCAACYSGWMERSSLCPTCR. Threonine 385 carries the post-translational modification Phosphothreonine. The disordered stretch occupies residues 389–413; that stretch reads LQPKVRRSFSDEEGSSEDLLELSDV. Acidic residues predominate over residues 399 to 413; it reads DEEGSSEDLLELSDV. The PBZ-type zinc finger occupies 633–655; that stretch reads PDCYWGRNCRTQVKAHHAMKFNH.

The protein belongs to the CHFR family. In terms of assembly, interacts with HDAC1 and HDAC2. Interacts with PML (with sumoylated form of PML). In terms of processing, poly-ADP-ribosylated. In addition to binding non covalently poly(ADP-ribose) via its PBZ-type zinc finger, the protein is also covalently poly-ADP-ribosylated by PARP1. Post-translationally, autoubiquitinated; may regulate its cellular level. Phosphorylated by PKB. Phosphorylation may affect its E3 ligase activity.

The protein localises to the nucleus. It is found in the PML body. It catalyses the reaction S-ubiquitinyl-[E2 ubiquitin-conjugating enzyme]-L-cysteine + [acceptor protein]-L-lysine = [E2 ubiquitin-conjugating enzyme]-L-cysteine + N(6)-ubiquitinyl-[acceptor protein]-L-lysine.. The protein operates within protein modification; protein ubiquitination. Functionally, E3 ubiquitin-protein ligase that functions in the antephase checkpoint by actively delaying passage into mitosis in response to microtubule poisons. Acts in early prophase before chromosome condensation, when the centrosome move apart from each other along the periphery of the nucleus. Probably involved in signaling the presence of mitotic stress caused by microtubule poisons by mediating the 'Lys-48'-linked ubiquitination of target proteins, leading to their degradation by the proteasome. Promotes the ubiquitination and subsequent degradation of AURKA and PLK1. Probably acts as a tumor suppressor, possibly by mediating the polyubiquitination of HDAC1, leading to its degradation. May also promote the formation of 'Lys-63'-linked polyubiquitin chains and functions with the specific ubiquitin-conjugating UBC13-MMS2 (UBE2N-UBE2V2) heterodimer. Substrates that are polyubiquitinated at 'Lys-63' are usually not targeted for degradation, but are rather involved in signaling cellular stress. The chain is E3 ubiquitin-protein ligase CHFR (Chfr) from Mus musculus (Mouse).